Consider the following 321-residue polypeptide: Small ribosomal subunit protein mS43 (321 aa).

A mitochondrion-targeting transit peptide spans 1-13 (MLRFTGARAIRKY).

It belongs to the mitochondrion-specific ribosomal protein mS43 family. As to quaternary structure, component of the mitochondrial small ribosomal subunit (mt-SSU). Mature yeast 74S mitochondrial ribosomes consist of a small (37S) and a large (54S) subunit. The 37S small subunit contains a 15S ribosomal RNA (15S mt-rRNA) and 34 different proteins. The 54S large subunit contains a 21S rRNA (21S mt-rRNA) and 46 different proteins. mS43 forms a heterodimer with mS42, building a large protuberance adjacent to the mRNA channel exit in the mt-SSU body.

Its subcellular location is the mitochondrion. Functionally, component of the mitochondrial ribosome (mitoribosome), a dedicated translation machinery responsible for the synthesis of mitochondrial genome-encoded proteins, including at least some of the essential transmembrane subunits of the mitochondrial respiratory chain. The mitoribosomes are attached to the mitochondrial inner membrane and translation products are cotranslationally integrated into the membrane. This is Small ribosomal subunit protein mS43 (MRP1) from Saccharomyces cerevisiae (strain ATCC 204508 / S288c) (Baker's yeast).